Consider the following 218-residue polypeptide: MTQYNFIIDASAFEKGLGNIKRWCSDCTEAVTLNFYIPTFTLNELDFLQQRRKSFAARESLKFIDRLDDSKFANLKVFIEFPEVLDIILWSDVMEHNDSSGKINIAKLPKRLKNLLKSCIYKCYLEGNEGLHWFLISEDPQIREMAMQCNIPSCSIVDVDSILSKDMNDKSFRESEKFNNMMLKNGTKEESENGREIIRTNFNKTVYASRGTGELWSP.

It is found in the cytoplasm. Functionally, involved in nonsense-mediated decay of mRNAs containing premature stop codons. In Saccharomyces cerevisiae (strain ATCC 204508 / S288c) (Baker's yeast), this protein is Nonsense-mediated decay protein 4 (NMD4).